The following is a 398-amino-acid chain: Acetate kinase (398 aa).

A Mg(2+)-binding site is contributed by N8. K15 contributes to the ATP binding site. R89 contacts substrate. The active-site Proton donor/acceptor is the D146. ATP-binding positions include 206–210 (HIGNG), 283–285 (DMR), and 331–335 (GMGEN). Mg(2+) is bound at residue E383.

The protein belongs to the acetokinase family. Homodimer. Requires Mg(2+) as cofactor. Mn(2+) is required as a cofactor.

It localises to the cytoplasm. It catalyses the reaction acetate + ATP = acetyl phosphate + ADP. Its pathway is metabolic intermediate biosynthesis; acetyl-CoA biosynthesis; acetyl-CoA from acetate: step 1/2. In terms of biological role, catalyzes the formation of acetyl phosphate from acetate and ATP. Can also catalyze the reverse reaction. The protein is Acetate kinase of Streptococcus pyogenes serotype M5 (strain Manfredo).